The following is a 678-amino-acid chain: F-box/LRR-repeat protein 5 (678 aa).

The hemerythrin-like stretch occupies residues 1 to 159 (MAPFPDEVDL…IKKKVIAQHC (159 aa)). Fe(3+) is bound by residues His15, His57, Glu58, Glu61, His80, His126, and Glu130. The F-box domain occupies 202–248 (SSSISSLPPEVMLNIFTYLNPQDLCRCSQVNTEWAQLAKTGSLWRHL). A disordered region spans residues 285 to 308 (YQEWDEDADIDESEETGEEEDSSI). Acidic residues predominate over residues 287-306 (EWDEDADIDESEETGEEEDS). LRR repeat units follow at residues 314 to 340 (EKEL…VLAY), 341 to 366 (SSAT…DLTQ), 367 to 392 (TDIS…DLSG), 393 to 420 (CDKI…RLLK), 566 to 594 (HSDI…SLSG), 595 to 622 (CHQI…NLSG), and 623 to 648 (CLNV…HFYY). Residues Cys649, Cys663, Cys673, and Cys674 each coordinate [2Fe-2S] cluster. The stretch at 655-678 (PHGATASGCQNLQCGFRMCCRSGE) is one LRR 8 repeat.

As to quaternary structure, part of a SCF (SKP1-cullin-F-box) protein ligase complex. [2Fe-2S] cluster serves as cofactor. In terms of processing, ubiquitinated upon iron and oxygen depletion, leading to its degradation by the proteasome. Ubiquitination is regulated by the hemerythrin-like region that acts as an oxygen and iron sensor.

Its subcellular location is the cytoplasm. It localises to the perinuclear region. It is found in the nucleus. The protein operates within protein modification; protein ubiquitination. Its function is as follows. Component of some SCF (SKP1-cullin-F-box) protein ligase complex that plays a central role in iron homeostasis by promoting the ubiquitination and subsequent degradation of ireb2/irp2. Upon high iron and oxygen level, it specifically recognizes and binds ireb2/irp2, promoting its ubiquitination and degradation by the proteasome. The sequence is that of F-box/LRR-repeat protein 5 (fbxl5) from Xenopus laevis (African clawed frog).